Consider the following 198-residue polypeptide: Transcriptional regulator GfcR (198 aa).

It belongs to the purine/pyrimidine phosphoribosyltransferase family. GfcR subfamily.

The polypeptide is Transcriptional regulator GfcR (Methanocorpusculum labreanum (strain ATCC 43576 / DSM 4855 / Z)).